We begin with the raw amino-acid sequence, 396 residues long: Elongation factor Tu (396 aa).

The region spanning 10–206 is the tr-type G domain; sequence KPHVNIGTIG…AVDSYIPEPV (197 aa). A G1 region spans residues 19-26; sequence GHVDHGKT. Position 19–26 (19–26) interacts with GTP; it reads GHVDHGKT. Threonine 26 contributes to the Mg(2+) binding site. Residues 60 to 64 form a G2 region; the sequence is GITIA. The G3 stretch occupies residues 81-84; sequence DCPG. GTP contacts are provided by residues 81–85 and 136–139; these read DCPGH and NKAD. Residues 136–139 form a G4 region; sequence NKAD. The G5 stretch occupies residues 174-176; it reads SAL.

The protein belongs to the TRAFAC class translation factor GTPase superfamily. Classic translation factor GTPase family. EF-Tu/EF-1A subfamily. Monomer.

The protein resides in the cytoplasm. The catalysed reaction is GTP + H2O = GDP + phosphate + H(+). Its function is as follows. GTP hydrolase that promotes the GTP-dependent binding of aminoacyl-tRNA to the A-site of ribosomes during protein biosynthesis. This is Elongation factor Tu from Geotalea uraniireducens (strain Rf4) (Geobacter uraniireducens).